We begin with the raw amino-acid sequence, 398 residues long: Small ribosomal subunit protein uS3m (398 aa).

Belongs to the universal ribosomal protein uS3 family. As to quaternary structure, component of the mitochondrial small ribosomal subunit (mt-SSU). Mature yeast 74S mitochondrial ribosomes consist of a small (37S) and a large (54S) subunit. The 37S small subunit contains a 15S ribosomal RNA (15S mt-rRNA) and 34 different proteins. The 54S large subunit contains a 21S rRNA (21S mt-rRNA) and 46 different proteins. uS3m, uS4m and uS5m form the narrow entry site of the mRNA channel.

It localises to the mitochondrion. Functionally, component of the mitochondrial ribosome (mitoribosome), a dedicated translation machinery responsible for the synthesis of mitochondrial genome-encoded proteins, including at least some of the essential transmembrane subunits of the mitochondrial respiratory chain. The mitoribosomes are attached to the mitochondrial inner membrane and translation products are cotranslationally integrated into the membrane. uS3m is essential for mitochondrial protein synthesis and required for the maturation of small ribosomal subunits. This chain is Small ribosomal subunit protein uS3m (VAR1), found in Saccharomyces cerevisiae (strain ATCC 204508 / S288c) (Baker's yeast).